We begin with the raw amino-acid sequence, 283 residues long: Aldo-keto reductase MSMEG_2407/MSMEI_2346 (283 aa).

Y58 acts as the Proton donor in catalysis. NADPH contacts are provided by G196, L198, V200, I236, R238, S239, A240, R244, S247, N248, and R274.

Belongs to the aldo/keto reductase family. In terms of assembly, monomer.

Its activity is regulated as follows. Inhibited by the antituberculosis drug isoniazid (INH). Functionally, catalyzes the NADPH-dependent reduction of dicarbonyls. Exhibits narrow substrate specificity, with preferential activity against the dicarbonyl substrates phenylglyoxal and methylglyoxal. Exhibits weak activity with ethyl-2-methyl acetoacetate. Cannot use NADH. May play an important role in the detoxification of methylglyoxal. The sequence is that of Aldo-keto reductase MSMEG_2407/MSMEI_2346 from Mycolicibacterium smegmatis (strain ATCC 700084 / mc(2)155) (Mycobacterium smegmatis).